We begin with the raw amino-acid sequence, 66 residues long: Nigrocin-2ISa (66 aa).

Positions 1–22 (MFTLKKSMLLLFFLGTINLSLC) are cleaved as a signal peptide. Residues 23–43 (QEERDAEEERRDEDNAKMEEI) constitute a propeptide, removed in mature form. A disulfide bridge connects residues C60 and C66.

As to expression, expressed by the skin glands.

The protein resides in the secreted. In terms of biological role, has antimicrobial activity against Gram-negative bacterium E.coli ATCC 8739 (MIC=25 ug), against Gram positive bacteria S.aureus ATCC 6538 (MIC=3.1 ug), methicillin-resistant S.aureus ATCC 43300 (MIC=12.5 ug), B.subtilis ATCC 6633 (MIC=12.5 ug) and against fungus C.albicans ATCC 90028 (MIC=50 ug). This Odorrana ishikawae (Ishikawa's frog) protein is Nigrocin-2ISa.